The chain runs to 126 residues: S-adenosylmethionine decarboxylase proenzyme (126 aa).

Catalysis depends on serine 63, which acts as the Schiff-base intermediate with substrate; via pyruvic acid. Serine 63 carries the post-translational modification Pyruvic acid (Ser); by autocatalysis. The Proton acceptor; for processing activity role is filled by histidine 68. The Proton donor; for catalytic activity role is filled by cysteine 83.

Belongs to the prokaryotic AdoMetDC family. Type 1 subfamily. As to quaternary structure, heterotetramer of two alpha and two beta chains arranged as a dimer of alpha/beta heterodimers. Pyruvate serves as cofactor. Is synthesized initially as an inactive proenzyme. Formation of the active enzyme involves a self-maturation process in which the active site pyruvoyl group is generated from an internal serine residue via an autocatalytic post-translational modification. Two non-identical subunits are generated from the proenzyme in this reaction, and the pyruvate is formed at the N-terminus of the alpha chain, which is derived from the carboxyl end of the proenzyme. The post-translation cleavage follows an unusual pathway, termed non-hydrolytic serinolysis, in which the side chain hydroxyl group of the serine supplies its oxygen atom to form the C-terminus of the beta chain, while the remainder of the serine residue undergoes an oxidative deamination to produce ammonia and the pyruvoyl group blocking the N-terminus of the alpha chain.

It carries out the reaction S-adenosyl-L-methionine + H(+) = S-adenosyl 3-(methylsulfanyl)propylamine + CO2. The protein operates within amine and polyamine biosynthesis; S-adenosylmethioninamine biosynthesis; S-adenosylmethioninamine from S-adenosyl-L-methionine: step 1/1. Its function is as follows. Catalyzes the decarboxylation of S-adenosylmethionine to S-adenosylmethioninamine (dcAdoMet), the propylamine donor required for the synthesis of the polyamines spermine and spermidine from the diamine putrescine. The chain is S-adenosylmethionine decarboxylase proenzyme from Clostridium kluyveri (strain NBRC 12016).